The sequence spans 186 residues: Probable chorismate pyruvate-lyase (186 aa).

R78, L116, and E175 together coordinate substrate.

The protein belongs to the UbiC family.

It is found in the cytoplasm. It catalyses the reaction chorismate = 4-hydroxybenzoate + pyruvate. Its pathway is cofactor biosynthesis; ubiquinone biosynthesis. Functionally, removes the pyruvyl group from chorismate, with concomitant aromatization of the ring, to provide 4-hydroxybenzoate (4HB) for the ubiquinone pathway. This chain is Probable chorismate pyruvate-lyase, found in Psychromonas ingrahamii (strain DSM 17664 / CCUG 51855 / 37).